An 815-amino-acid polypeptide reads, in one-letter code: (E)-gamma-bisabolene synthase (815 aa).

4 residues coordinate Mg(2+): Asp561, Asp565, Asp709, and Glu717. The DDXXD motif signature appears at Asp561–Asp565.

It belongs to the terpene synthase family. Tpsd subfamily. It depends on Mg(2+) as a cofactor. Mn(2+) is required as a cofactor.

The protein resides in the cytoplasm. The catalysed reaction is (2E,6E)-farnesyl diphosphate = (E)-gamma-bisabolene + diphosphate. It functions in the pathway terpene metabolism; oleoresin biosynthesis. Its function is as follows. Involved in defensive oleoresin formation in conifers in response to insect attack or other injury. Involved in sesquiterpene (C15) olefins biosynthesis. Produces mainly (E)-gamma-bisabolene when used with farnesyl diphosphate as substrate. No activity with geranyl diphosphate or geranylgeranyl diphosphate. The polypeptide is (E)-gamma-bisabolene synthase (TPS3) (Pseudotsuga menziesii (Douglas-fir)).